We begin with the raw amino-acid sequence, 122 residues long: Large ribosomal subunit protein uL14c (122 aa).

This sequence belongs to the universal ribosomal protein uL14 family. In terms of assembly, part of the 50S ribosomal subunit.

The protein localises to the plastid. The protein resides in the chloroplast. Its function is as follows. Binds to 23S rRNA. The protein is Large ribosomal subunit protein uL14c of Physcomitrium patens (Spreading-leaved earth moss).